Consider the following 90-residue polypeptide: Small ribosomal subunit protein uS15c (90 aa).

The protein belongs to the universal ribosomal protein uS15 family. Part of the 30S ribosomal subunit.

Its subcellular location is the plastid. It is found in the chloroplast. The protein is Small ribosomal subunit protein uS15c (rps15-A) of Zea mays (Maize).